The sequence spans 204 residues: Flavin-dependent thymidylate synthase (204 aa).

The region spanning Met-1–Gly-204 is the ThyX domain. FAD is bound by residues Ser-50 and Arg-74–Arg-76. DUMP contacts are provided by residues Glu-71–Arg-74, Ser-84–Arg-86, and Lys-143. The ThyX motif signature appears at Arg-74–Ser-84. Residues Asn-159–Arg-161 and Asn-165 each bind FAD. Position 170 (Arg-170) interacts with dUMP. Arg-170 serves as the catalytic Involved in ionization of N3 of dUMP, leading to its activation.

The protein belongs to the thymidylate synthase ThyX family. Homotetramer. Requires FAD as cofactor.

The enzyme catalyses dUMP + (6R)-5,10-methylene-5,6,7,8-tetrahydrofolate + NADPH + H(+) = dTMP + (6S)-5,6,7,8-tetrahydrofolate + NADP(+). It functions in the pathway pyrimidine metabolism; dTTP biosynthesis. Its function is as follows. Catalyzes the reductive methylation of 2'-deoxyuridine-5'-monophosphate (dUMP) to 2'-deoxythymidine-5'-monophosphate (dTMP) while utilizing 5,10-methylenetetrahydrofolate (mTHF) as the methyl donor, and NADPH and FADH(2) as the reductant. This chain is Flavin-dependent thymidylate synthase, found in Wolinella succinogenes (strain ATCC 29543 / DSM 1740 / CCUG 13145 / JCM 31913 / LMG 7466 / NCTC 11488 / FDC 602W) (Vibrio succinogenes).